Here is a 353-residue protein sequence, read N- to C-terminus: MSDDEFIDEYDDIYSKLCQEAQDFLIIKDIERIEKPTALEFYREYVSQNKPVIITGLLENWKAYKEWSDDYLENVMKDVEVTVSITNDGLADAVKPINENDPKSERVFCKPFEKKIKFQEYIKHSKKSSKENKNKLAYYIQYQNNSLNVEYDKLLNDIDESVIDFAKEAFGSNIDATNFWMGQDKSVSSLHQDPYENMYCVVRGTKIFTLLPPIDYPFLYKSEFPSASFVNVGCDDNDENIKLEIQIDNDPKMNIPWIPVDPTETLENNIKLGYPLIERAHPITIRVEAGEVLYLPSLYFHRVAQESNKTSNSLSTIAINYWFDMKYGINYVYFQFLKETTKYQKQIKNKNKK.

Residues 138–348 enclose the JmjC domain; sequence YYIQYQNNSL…ETTKYQKQIK (211 aa).

In Dictyostelium discoideum (Social amoeba), this protein is JmjC domain-containing protein E (jcdE).